Consider the following 307-residue polypeptide: Transcription factor DIVARICATA (307 aa).

The 54-residue stretch at 21–74 (RSTTRWTAAENKAFENALAVFDENTPNRWERVAERVPGKTVGDVMRQYKELEDD) folds into the SANT domain. The interval 109 to 133 (QSYGTGGRKSSSGRPSEQERKKGVP) is disordered. The span at 124 to 133 (SEQERKKGVP) shows a compositional bias: basic and acidic residues. Positions 126–182 (QERKKGVPWTEEEHKLFLMGLKKYGKGDWRNISRNFVITRTPTQVASHAQKYFIRQL) constitute an HTH myb-type domain. The H-T-H motif DNA-binding region spans 154–178 (WRNISRNFVITRTPTQVASHAQKYF). Polar residues-rich tracts occupy residues 196-206 (ITTVNLSDNQT) and 222-231 (MAQQQTSSTS). Residues 196-231 (ITTVNLSDNQTPSPDNKKPPSSPDHSMAQQQTSSTS) form a disordered region.

It is found in the nucleus. In terms of biological role, involved in the dorsovental asymmetry of flowers. Promotes ventral identity. In Antirrhinum majus (Garden snapdragon), this protein is Transcription factor DIVARICATA (DIVARICATA).